Here is a 175-residue protein sequence, read N- to C-terminus: Small ribosomal subunit protein mS38 (175 aa).

The protein belongs to the mitochondrion-specific ribosomal protein mS38 family. In terms of assembly, component of the mitochondrial small ribosomal subunit (mt-SSU). Mature yeast 74S mitochondrial ribosomes consist of a small (37S) and a large (54S) subunit. The 37S small subunit contains a 15S ribosomal RNA (15S mt-rRNA) and at least 32 different proteins. The 54S large subunit contains a 21S rRNA (21S mt-rRNA) and at least 45 different proteins.

The protein resides in the mitochondrion. The protein localises to the mitochondrion inner membrane. Functionally, component of the mitochondrial ribosome (mitoribosome), a dedicated translation machinery responsible for the synthesis of mitochondrial genome-encoded proteins, including at least some of the essential transmembrane subunits of the mitochondrial respiratory chain. The mitoribosomes are attached to the mitochondrial inner membrane and translation products are cotranslationally integrated into the membrane. mS38 is also involved in the splicing of the COX1 mRNA. This chain is Small ribosomal subunit protein mS38 (cox24), found in Schizosaccharomyces pombe (strain 972 / ATCC 24843) (Fission yeast).